The chain runs to 1048 residues: Probable inactive receptor kinase At5g10020 (1048 aa).

An N-terminal signal peptide occupies residues 1–21 (MSHFLTFCFLSLLLLLHGANA). LRR repeat units follow at residues 100 to 120 (RLRN…PSLG), 124 to 146 (SLQH…ISEL), 148 to 169 (SLNH…GFRN), 172 to 194 (QLRS…FTEL), 196 to 217 (NVEF…PMEN), 224 to 246 (TLRH…ESIG), 250 to 272 (NLEI…GSQP), 273 to 294 (SLRI…ELLQ), 298 to 319 (PLLE…INSS), 320 to 342 (TLTM…FKSC), 365 to 387 (TPDV…TSAF), 389 to 411 (RLSV…WGDS), 412 to 433 (QFSV…SFFT), 436 to 457 (SLRS…RGSR), 469 to 491 (QMEL…IGTM), 493 to 516 (KIKV…NKLS), 517 to 539 (GLLF…LPSQ), and 540 to 560 (MVGF…DLRS). The chain crosses the membrane as a helical span at residues 602-622 (IAIIVASVGAAIMILFVLFAY). Residues 696–733 (EQGAPATSAPTNLLDDYPAASGRKSSSGGSPLSSSPRF) form a disordered region. Positions 716–733 (SGRKSSSGGSPLSSSPRF) are enriched in low complexity. Ser-744 carries the post-translational modification Phosphoserine. Positions 768-1045 (RAPAEVLGRS…IRQVLDHLTS (278 aa)) constitute a Protein kinase domain. ATP contacts are provided by residues 774–782 (LGRSSHGTL) and Lys-796.

The protein belongs to the protein kinase superfamily.

It localises to the membrane. This is Probable inactive receptor kinase At5g10020 from Arabidopsis thaliana (Mouse-ear cress).